The primary structure comprises 56 residues: Large ribosomal subunit protein eL37 (56 aa).

Residues Cys-19, Cys-22, Cys-34, and Cys-37 each coordinate Zn(2+). Residues Cys-19–Cys-37 form a C4-type zinc finger.

This sequence belongs to the eukaryotic ribosomal protein eL37 family. The cofactor is Zn(2+).

In terms of biological role, binds to the 23S rRNA. The sequence is that of Large ribosomal subunit protein eL37 from Methanosarcina mazei (strain ATCC BAA-159 / DSM 3647 / Goe1 / Go1 / JCM 11833 / OCM 88) (Methanosarcina frisia).